The chain runs to 274 residues: Dermonecrotic toxin SdSicTox-betaIIB1bv (274 aa).

His5 is an active-site residue. Residues Glu25 and Asp27 each coordinate Mg(2+). His41 acts as the Nucleophile in catalysis. 2 disulfide bridges follow: Cys45/Cys51 and Cys47/Cys190. A Mg(2+)-binding site is contributed by Asp85.

The protein belongs to the arthropod phospholipase D family. Class II subfamily. The cofactor is Mg(2+). Expressed by the venom gland.

It is found in the secreted. The enzyme catalyses an N-(acyl)-sphingosylphosphocholine = an N-(acyl)-sphingosyl-1,3-cyclic phosphate + choline. The catalysed reaction is an N-(acyl)-sphingosylphosphoethanolamine = an N-(acyl)-sphingosyl-1,3-cyclic phosphate + ethanolamine. It catalyses the reaction a 1-acyl-sn-glycero-3-phosphocholine = a 1-acyl-sn-glycero-2,3-cyclic phosphate + choline. It carries out the reaction a 1-acyl-sn-glycero-3-phosphoethanolamine = a 1-acyl-sn-glycero-2,3-cyclic phosphate + ethanolamine. Its function is as follows. Dermonecrotic toxins cleave the phosphodiester linkage between the phosphate and headgroup of certain phospholipids (sphingolipid and lysolipid substrates), forming an alcohol (often choline) and a cyclic phosphate. This toxin acts on sphingomyelin (SM). It may also act on ceramide phosphoethanolamine (CPE), lysophosphatidylcholine (LPC) and lysophosphatidylethanolamine (LPE), but not on lysophosphatidylserine (LPS), and lysophosphatidylglycerol (LPG). It acts by transphosphatidylation, releasing exclusively cyclic phosphate products as second products. Induces dermonecrosis, hemolysis, increased vascular permeability, edema, inflammatory response, and platelet aggregation. This chain is Dermonecrotic toxin SdSicTox-betaIIB1bv, found in Sicarius cf. damarensis (strain GJB-2008) (Six-eyed sand spider).